We begin with the raw amino-acid sequence, 113 residues long: Large ribosomal subunit protein P2 (113 aa).

The segment at 62–113 (LASVPSGGAGGAAASGGAAAAGGSAQAEAAPEAAKEEEKEESDEDMGFGLFD) is disordered. The span at 76-93 (SGGAAAAGGSAQAEAAPE) shows a compositional bias: low complexity. The residue at position 103 (S103) is a Phosphoserine.

It belongs to the eukaryotic ribosomal protein P1/P2 family. P1 and P2 exist as dimers at the large ribosomal subunit.

Its function is as follows. Plays an important role in the elongation step of protein synthesis. This is Large ribosomal subunit protein P2 (ALTA5) from Alternaria alternata (Alternaria rot fungus).